The primary structure comprises 446 residues: WEB family protein At3g56270 (446 aa).

The stretch at 313 to 349 forms a coiled coil; that stretch reads TNVSRIEILRKLEEANEEVKQSKQALEVALNRVEIAS.

This sequence belongs to the WEB family.

This is WEB family protein At3g56270 from Arabidopsis thaliana (Mouse-ear cress).